A 280-amino-acid chain; its full sequence is MRHTLPIAPQFYVTAPQSCPYLEGRLERKLFTALQGEHAQKLNDTLSKQGFRRSQNVLYRPSCAECSACLSARIRVADFEPTRTQRRVMKRNADLRRNATSPWATEDQYALFRRYLDDRHADGGMADMDIFEFAAMIEETPIRSRVIEYSRPGDTPSNRPLSAVCLTDIFDDGLSMVYSFYDPDLAGRSLGAYVILDHIEIAREAGLPYVYLGYWVPGSRKMGYKATYSALEIYKGGRWQAIGQPSDHRAELHPLSVDPIAEQVARISLPEARSGDRSRD.

Belongs to the R-transferase family. Bpt subfamily.

Its subcellular location is the cytoplasm. The enzyme catalyses N-terminal L-glutamyl-[protein] + L-leucyl-tRNA(Leu) = N-terminal L-leucyl-L-glutamyl-[protein] + tRNA(Leu) + H(+). The catalysed reaction is N-terminal L-aspartyl-[protein] + L-leucyl-tRNA(Leu) = N-terminal L-leucyl-L-aspartyl-[protein] + tRNA(Leu) + H(+). In terms of biological role, functions in the N-end rule pathway of protein degradation where it conjugates Leu from its aminoacyl-tRNA to the N-termini of proteins containing an N-terminal aspartate or glutamate. The chain is Aspartate/glutamate leucyltransferase from Cereibacter sphaeroides (strain ATCC 17023 / DSM 158 / JCM 6121 / CCUG 31486 / LMG 2827 / NBRC 12203 / NCIMB 8253 / ATH 2.4.1.) (Rhodobacter sphaeroides).